Here is a 354-residue protein sequence, read N- to C-terminus: Selenide, water dikinase (354 aa).

Residue Cys-23 is part of the active site. Residues Lys-26 and 54-56 contribute to the ATP site; that span reads TSD. Asp-57 serves as a coordination point for Mg(2+). ATP contacts are provided by residues Asp-74, Asp-97, and 145-147; that span reads GHS. Asp-97 contacts Mg(2+). Asp-233 is a binding site for Mg(2+).

Belongs to the selenophosphate synthase 1 family. Class I subfamily. In terms of assembly, homodimer. Mg(2+) is required as a cofactor.

It carries out the reaction hydrogenselenide + ATP + H2O = selenophosphate + AMP + phosphate + 2 H(+). Its function is as follows. Synthesizes selenophosphate from selenide and ATP. The chain is Selenide, water dikinase from Burkholderia pseudomallei (strain K96243).